The following is a 155-amino-acid chain: Ribosome maturation factor RimP (155 aa).

This sequence belongs to the RimP family.

It is found in the cytoplasm. Its function is as follows. Required for maturation of 30S ribosomal subunits. This chain is Ribosome maturation factor RimP, found in Phocaeicola vulgatus (strain ATCC 8482 / DSM 1447 / JCM 5826 / CCUG 4940 / NBRC 14291 / NCTC 11154) (Bacteroides vulgatus).